A 253-amino-acid polypeptide reads, in one-letter code: Ribosomal RNA small subunit methyltransferase G (253 aa).

S-adenosyl-L-methionine contacts are provided by residues Gly84, Leu89, 136–137 (IE), and Arg155.

Belongs to the methyltransferase superfamily. RNA methyltransferase RsmG family.

It is found in the cytoplasm. In terms of biological role, specifically methylates the N7 position of a guanine in 16S rRNA. In Prochlorococcus marinus (strain SARG / CCMP1375 / SS120), this protein is Ribosomal RNA small subunit methyltransferase G.